We begin with the raw amino-acid sequence, 61 residues long: Large ribosomal subunit protein bL32c (61 aa).

Positions 37-61 are disordered; it reads SRSFSSGNEHPKPKGFSGQQQQTNK.

The protein belongs to the bacterial ribosomal protein bL32 family.

The protein resides in the plastid. It localises to the chloroplast. The chain is Large ribosomal subunit protein bL32c from Agrostis stolonifera (Creeping bentgrass).